Consider the following 118-residue polypeptide: NADH-quinone oxidoreductase subunit A (118 aa).

Transmembrane regions (helical) follow at residues 6-26 (LIIG…LLTA), 61-81 (FMYG…LPWA), and 87-107 (LGLF…IGLW).

This sequence belongs to the complex I subunit 3 family. As to quaternary structure, NDH-1 is composed of 14 different subunits. Subunits NuoA, H, J, K, L, M, N constitute the membrane sector of the complex.

The protein resides in the cell membrane. The enzyme catalyses a quinone + NADH + 5 H(+)(in) = a quinol + NAD(+) + 4 H(+)(out). Functionally, NDH-1 shuttles electrons from NADH, via FMN and iron-sulfur (Fe-S) centers, to quinones in the respiratory chain. The immediate electron acceptor for the enzyme in this species is believed to be a menaquinone. Couples the redox reaction to proton translocation (for every two electrons transferred, four hydrogen ions are translocated across the cytoplasmic membrane), and thus conserves the redox energy in a proton gradient. The protein is NADH-quinone oxidoreductase subunit A of Clostridium beijerinckii (strain ATCC 51743 / NCIMB 8052) (Clostridium acetobutylicum).